The chain runs to 370 residues: 4-hydroxy-3-methylbut-2-en-1-yl diphosphate synthase (flavodoxin) (370 aa).

The [4Fe-4S] cluster site is built by cysteine 270, cysteine 273, cysteine 305, and glutamate 312.

Belongs to the IspG family. [4Fe-4S] cluster is required as a cofactor.

It catalyses the reaction (2E)-4-hydroxy-3-methylbut-2-enyl diphosphate + oxidized [flavodoxin] + H2O + 2 H(+) = 2-C-methyl-D-erythritol 2,4-cyclic diphosphate + reduced [flavodoxin]. It participates in isoprenoid biosynthesis; isopentenyl diphosphate biosynthesis via DXP pathway; isopentenyl diphosphate from 1-deoxy-D-xylulose 5-phosphate: step 5/6. Its function is as follows. Converts 2C-methyl-D-erythritol 2,4-cyclodiphosphate (ME-2,4cPP) into 1-hydroxy-2-methyl-2-(E)-butenyl 4-diphosphate. The sequence is that of 4-hydroxy-3-methylbut-2-en-1-yl diphosphate synthase (flavodoxin) from Saccharophagus degradans (strain 2-40 / ATCC 43961 / DSM 17024).